A 367-amino-acid polypeptide reads, in one-letter code: Alanine racemase (367 aa).

Lysine 40 (proton acceptor; specific for D-alanine) is an active-site residue. N6-(pyridoxal phosphate)lysine is present on lysine 40. A substrate-binding site is contributed by arginine 136. Tyrosine 263 acts as the Proton acceptor; specific for L-alanine in catalysis. A substrate-binding site is contributed by methionine 310.

The protein belongs to the alanine racemase family. Pyridoxal 5'-phosphate is required as a cofactor.

It catalyses the reaction L-alanine = D-alanine. The protein operates within amino-acid biosynthesis; D-alanine biosynthesis; D-alanine from L-alanine: step 1/1. Functionally, catalyzes the interconversion of L-alanine and D-alanine. May also act on other amino acids. This chain is Alanine racemase (alr), found in Lactococcus lactis subsp. cremoris (strain SK11).